The following is a 334-amino-acid chain: Chitinase 9 (334 aa).

The first 23 residues, 1 to 23 (MKATTTAVALLVAAAAMAAQVVA), serve as a signal peptide directing secretion. A Chitin-binding type-1 domain is found at 24 to 64 (EQCGSQAGGALCPNCLCCSSYGWCGSTSDYCGDGCQSQCDG). Cystine bridges form between cysteine 26/cysteine 41, cysteine 35/cysteine 47, cysteine 38/cysteine 65, cysteine 40/cysteine 54, cysteine 58/cysteine 62, cysteine 107/cysteine 169, cysteine 181/cysteine 189, and cysteine 288/cysteine 320. Residue glutamate 151 is the Proton donor of the active site.

This sequence belongs to the glycosyl hydrolase 19 family. Chitinase class I subfamily. In terms of tissue distribution, expressed at high levels in roots, sheaths and meristems.

It catalyses the reaction Random endo-hydrolysis of N-acetyl-beta-D-glucosaminide (1-&gt;4)-beta-linkages in chitin and chitodextrins.. Functionally, may play a role in defense against fungal pathogens containing chitin. The chain is Chitinase 9 (Cht9) from Oryza sativa subsp. japonica (Rice).